A 256-amino-acid chain; its full sequence is Isoprenyl transferase 1 (256 aa).

The active site involves Asp34. Position 34 (Asp34) interacts with Mg(2+). Substrate-binding positions include 35–38, Trp39, His52, and 80–82; these read GNRR and STE. Asn83 functions as the Proton acceptor in the catalytic mechanism. Substrate-binding positions include Arg86, Arg205, and 211-213; that span reads RLS. Glu224 is a binding site for Mg(2+).

The protein belongs to the UPP synthase family. In terms of assembly, homodimer. Mg(2+) serves as cofactor.

Functionally, catalyzes the condensation of isopentenyl diphosphate (IPP) with allylic pyrophosphates generating different type of terpenoids. The polypeptide is Isoprenyl transferase 1 (Corynebacterium efficiens (strain DSM 44549 / YS-314 / AJ 12310 / JCM 11189 / NBRC 100395)).